Consider the following 344-residue polypeptide: Meiotic recombination protein DMC1 homolog A (344 aa).

Position 133 to 140 (133 to 140) interacts with ATP; sequence GEFRSGKT. R235 contributes to the dsDNA binding site. SsDNA contacts are provided by R235, F238, R241, R247, and R315. Positions 241 and 247 each coordinate dsDNA.

The protein belongs to the RecA family. DMC1 subfamily. As to expression, expressed in pollen mother cells and root tips.

The protein localises to the nucleus. Its function is as follows. Recombinase that may participate in meiotic recombination, specifically in homologous strand assimilation, which is required for the resolution of meiotic double-strand breaks. Exhibits DNA-dependent ATPase activity when bound to single-stranded DNA (ssDNA). Mediates renaturation of homologous complementary strands as well as assimilation of single strands into homologous supercoiled duplexes leading to D-loop formation. Binds circular single-stranded DNA (ssDNA) and circular double-stranded DNA (dsDNA) in vitro. Catalyzes DNA homologous renaturation and DNA strand exchange. The rates of these activities are dependent on the state of ATP hydrolysis. Forms helical filaments along ssDNA and dsDNA, and promotes strand exchange between ssDNA and dsDNA with long DNA substrates of several thousand base pairs. The presence of the replication protein A is not required for this activity. Seems to be required for homologous pairing and subsequent chromosome segregation during male meiosis. May be not directly required for homologous pairing during male meiosis. Required for synaptonemal complex assembly and crossover formation. Functions redundantly with DMC1B. The sequence is that of Meiotic recombination protein DMC1 homolog A from Oryza sativa subsp. indica (Rice).